The following is a 295-amino-acid chain: Glutamyl-Q tRNA(Asp) synthetase (295 aa).

Residues 9–13 (RFAPT) and glutamate 45 contribute to the L-glutamate site. Positions 12–22 (PTPSGFLHFGS) match the 'HIGH' region motif. Residues cysteine 101, cysteine 103, tyrosine 115, and cysteine 119 each coordinate Zn(2+). L-glutamate-binding residues include tyrosine 172 and arginine 190. A 'KMSKS' region motif is present at residues 228-232 (KLGKS). Lysine 231 serves as a coordination point for ATP.

The protein belongs to the class-I aminoacyl-tRNA synthetase family. GluQ subfamily. It depends on Zn(2+) as a cofactor.

Its function is as follows. Catalyzes the tRNA-independent activation of glutamate in presence of ATP and the subsequent transfer of glutamate onto a tRNA(Asp). Glutamate is transferred on the 2-amino-5-(4,5-dihydroxy-2-cyclopenten-1-yl) moiety of the queuosine in the wobble position of the QUC anticodon. In Pseudomonas putida (strain W619), this protein is Glutamyl-Q tRNA(Asp) synthetase.